We begin with the raw amino-acid sequence, 276 residues long: Checkpoint protein HUS1B (276 aa).

Belongs to the HUS1 family. In terms of assembly, interacts with RAD1 and RAD9B.

The protein is Checkpoint protein HUS1B (Hus1b) of Mus musculus (Mouse).